The following is a 300-amino-acid chain: Transcription initiation factor IIB 1 (300 aa).

The TFIIB-type zinc finger occupies 3–34 (GKRVCPVCGSTEFIYDPSRGEIVCKVCGYVIE). Positions 7, 10, 26, and 29 each coordinate Zn(2+). A run of 2 repeats spans residues 114 to 197 (SELD…ARHL) and 210 to 291 (DYVN…ELVE).

This sequence belongs to the TFIIB family.

Its function is as follows. Stabilizes TBP binding to an archaeal box-A promoter. Also responsible for recruiting RNA polymerase II to the pre-initiation complex (DNA-TBP-TFIIB). The polypeptide is Transcription initiation factor IIB 1 (Thermococcus kodakarensis (strain ATCC BAA-918 / JCM 12380 / KOD1) (Pyrococcus kodakaraensis (strain KOD1))).